Here is a 320-residue protein sequence, read N- to C-terminus: Heptaprenyl diphosphate synthase component 2 (320 aa).

Isopentenyl diphosphate-binding residues include Lys45, Arg48, and His77. Residues Asp84 and Asp88 each contribute to the Mg(2+) site. Arg93 contributes to the all-trans-hexaprenyl diphosphate binding site. Residue Arg94 coordinates isopentenyl diphosphate. 3 residues coordinate all-trans-hexaprenyl diphosphate: Lys170, Thr171, and Gln208.

Belongs to the FPP/GGPP synthase family. As to quaternary structure, heterodimer of component I and II. It depends on Mg(2+) as a cofactor.

The catalysed reaction is 4 isopentenyl diphosphate + (2E,6E)-farnesyl diphosphate = all-trans-heptaprenyl diphosphate + 4 diphosphate. Supplies heptaprenyl diphosphate, the precursor for the side chain of the isoprenoid quinone menaquinone-7 (MQ-7). The polypeptide is Heptaprenyl diphosphate synthase component 2 (hepT) (Geobacillus stearothermophilus (Bacillus stearothermophilus)).